The following is a 231-amino-acid chain: 5'-methylthioadenosine/S-adenosylhomocysteine nucleosidase (231 aa).

Glutamate 12 (proton acceptor) is an active-site residue. Substrate-binding positions include glycine 78, valine 153, and 174–175 (ME). Aspartate 198 (proton donor) is an active-site residue.

Belongs to the PNP/UDP phosphorylase family. MtnN subfamily.

The catalysed reaction is S-adenosyl-L-homocysteine + H2O = S-(5-deoxy-D-ribos-5-yl)-L-homocysteine + adenine. It carries out the reaction S-methyl-5'-thioadenosine + H2O = 5-(methylsulfanyl)-D-ribose + adenine. The enzyme catalyses 5'-deoxyadenosine + H2O = 5-deoxy-D-ribose + adenine. It functions in the pathway amino-acid biosynthesis; L-methionine biosynthesis via salvage pathway; S-methyl-5-thio-alpha-D-ribose 1-phosphate from S-methyl-5'-thioadenosine (hydrolase route): step 1/2. Functionally, catalyzes the irreversible cleavage of the glycosidic bond in both 5'-methylthioadenosine (MTA) and S-adenosylhomocysteine (SAH/AdoHcy) to adenine and the corresponding thioribose, 5'-methylthioribose and S-ribosylhomocysteine, respectively. Also cleaves 5'-deoxyadenosine, a toxic by-product of radical S-adenosylmethionine (SAM) enzymes, into 5-deoxyribose and adenine. This chain is 5'-methylthioadenosine/S-adenosylhomocysteine nucleosidase, found in Aliivibrio salmonicida (strain LFI1238) (Vibrio salmonicida (strain LFI1238)).